We begin with the raw amino-acid sequence, 308 residues long: Urease accessory protein UreD (308 aa).

The protein belongs to the UreD family. As to quaternary structure, ureD, UreF and UreG form a complex that acts as a GTP-hydrolysis-dependent molecular chaperone, activating the urease apoprotein by helping to assemble the nickel containing metallocenter of UreC. The UreE protein probably delivers the nickel.

Its subcellular location is the cytoplasm. Functionally, required for maturation of urease via the functional incorporation of the urease nickel metallocenter. This is Urease accessory protein UreD from Psychromonas ingrahamii (strain DSM 17664 / CCUG 51855 / 37).